Consider the following 268-residue polypeptide: Phosphate import ATP-binding protein PstB 2 (268 aa).

One can recognise an ABC transporter domain in the interval 22–263; sequence MALTGVNFYY…PKVKRTEDYI (242 aa). ATP is bound at residue 54–61; sequence GPSGCGKS.

The protein belongs to the ABC transporter superfamily. Phosphate importer (TC 3.A.1.7) family. In terms of assembly, the complex is composed of two ATP-binding proteins (PstB), two transmembrane proteins (PstC and PstA) and a solute-binding protein (PstS).

Its subcellular location is the cell inner membrane. It carries out the reaction phosphate(out) + ATP + H2O = ADP + 2 phosphate(in) + H(+). Its function is as follows. Part of the ABC transporter complex PstSACB involved in phosphate import. Responsible for energy coupling to the transport system. The protein is Phosphate import ATP-binding protein PstB 2 of Rhizobium johnstonii (strain DSM 114642 / LMG 32736 / 3841) (Rhizobium leguminosarum bv. viciae).